Consider the following 481-residue polypeptide: Phosphoglycerate kinase, chloroplastic (481 aa).

Residues 1 to 75 (MASATASHTL…SSKPIRGVAS (75 aa)) constitute a chloroplast transit peptide. Positions 98, 99, 101, 115, 137, 138, 140, 141, 196, 228, and 229 each coordinate (2R)-3-phosphoglycerate. Glycine 274 contacts ADP. Position 274 (glycine 274) interacts with CDP. Positions 276 and 280 each coordinate AMP. ATP is bound at residue lysine 280. ADP is bound at residue glycine 298. A CDP-binding site is contributed by glycine 298. Residues glycine 299 and glycine 371 each coordinate AMP. ATP-binding residues include glycine 299 and glycine 371. CDP is bound by residues glycine 396 and phenylalanine 401. Phenylalanine 401 contributes to the ADP binding site. Glutamate 402 lines the AMP pocket. ATP-binding residues include glutamate 402, aspartate 433, and serine 434. A Mg(2+)-binding site is contributed by aspartate 433.

The protein belongs to the phosphoglycerate kinase family. As to quaternary structure, monomer. Mg(2+) serves as cofactor.

It is found in the plastid. The protein resides in the chloroplast. The catalysed reaction is (2R)-3-phosphoglycerate + ATP = (2R)-3-phospho-glyceroyl phosphate + ADP. It functions in the pathway carbohydrate biosynthesis; Calvin cycle. This is Phosphoglycerate kinase, chloroplastic from Nicotiana tabacum (Common tobacco).